Here is a 218-residue protein sequence, read N- to C-terminus: Octanoyltransferase (218 aa).

The 176-residue stretch at 31-206 (EETPDEVWLV…ELVNLLGYEQ (176 aa)) folds into the BPL/LPL catalytic domain. Residues 70–77 (RGGQVTYH), 137–139 (SLG), and 150–152 (GLA) each bind substrate. The Acyl-thioester intermediate role is filled by Cys-168.

This sequence belongs to the LipB family.

The protein resides in the cytoplasm. It carries out the reaction octanoyl-[ACP] + L-lysyl-[protein] = N(6)-octanoyl-L-lysyl-[protein] + holo-[ACP] + H(+). It functions in the pathway protein modification; protein lipoylation via endogenous pathway; protein N(6)-(lipoyl)lysine from octanoyl-[acyl-carrier-protein]: step 1/2. In terms of biological role, catalyzes the transfer of endogenously produced octanoic acid from octanoyl-acyl-carrier-protein onto the lipoyl domains of lipoate-dependent enzymes. Lipoyl-ACP can also act as a substrate although octanoyl-ACP is likely to be the physiological substrate. This is Octanoyltransferase from Vibrio vulnificus (strain CMCP6).